The following is a 335-amino-acid chain: Abasic site processing protein HMCES (335 aa).

Catalysis depends on Cys2, which acts as the Nucleophile. At Cys2 the chain carries Thiazolidine linkage to a ring-opened DNA abasic site. Residues 24-39 show a composition bias toward basic and acidic residues; that stretch reads QGGRKWPNWRDGDSDK. Residues 24–51 are disordered; that stretch reads QGGRKWPNWRDGDSDKYQPSYNKSPQSN. Polar residues predominate over residues 40–51; it reads YQPSYNKSPQSN. Glu129 is an active-site residue. A disordered region spans residues 284 to 335; sequence LQNKSPKKEESHSIQSPKLSQFGAPPKKTSAGLMQQWLKKEDGEPSPKRAKK. A compositionally biased stretch (basic and acidic residues) spans 321–335; the sequence is LKKEDGEPSPKRAKK.

This sequence belongs to the SOS response-associated peptidase family. Post-translationally, ubiquitination of the hmces DNA-protein cross-link by rfwd3 may promotes its degradation.

The protein resides in the chromosome. With respect to regulation, formation and reversal of DNA-protein cross-link depends on DNA context. Catalyzes formation of the thiazolidine linkage in presence of abasic sites in single-stranded DNA. Mediates the reversal of the thiazolidine cross-link in presence of double stranded DNA. Sensor of abasic sites in single-stranded DNA (ssDNA) required to preserve genome integrity by promoting error-free repair of abasic sites. Acts as an enzyme that recognizes and binds abasic sites in ssDNA at replication forks and chemically modifies the lesion by forming a covalent cross-link with DNA: forms a stable thiazolidine linkage between a ring-opened abasic site and the alpha-amino and sulfhydryl substituents of its N-terminal catalytic cysteine residue. The hmces DNA-protein cross-link is then either reversed or degraded. Hmces is able to catalyze the reversal of its thiazolidine cross-link and cycle between a cross-link and a non-cross-linked state depending on DNA context: mediates self-reversal of the thiazolidine cross-link in double stranded DNA, allowing apex1 to initiate downstream repair of abasic sites. The hmces DNA-protein cross-link can also be degraded by the sprtn metalloprotease following unfolding by the brip1/fancj helicase. Promotes error-free repair of abasic sites by protecting abasic sites from translesion synthesis (TLS) polymerases and endonucleases that are error-prone and would generate mutations and double-strand breaks. Acts as a protease: mediates autocatalytic processing of its N-terminal methionine in order to expose the catalytic cysteine. The hmces DNA-protein cross-link is then either reversed or degraded. According to a model, the HMCES DNA-protein cross-link. The polypeptide is Abasic site processing protein HMCES (Xenopus tropicalis (Western clawed frog)).